We begin with the raw amino-acid sequence, 385 residues long: Cyclin-A3-2 (385 aa).

Positions 1–110 (MADKENSTPA…STSTASPSSG (110 aa)) are disordered. Composition is skewed to low complexity over residues 7 to 41 (STPA…GAPP), 74 to 88 (PSSK…AAAP), and 96 to 110 (PVSS…PSSG).

It belongs to the cyclin family. Cyclin AB subfamily.

The polypeptide is Cyclin-A3-2 (CYCA3-2) (Oryza sativa subsp. japonica (Rice)).